Reading from the N-terminus, the 372-residue chain is Transcription factor YY2 (372 aa).

A mediates transcriptional activation region spans residues 32-102; sequence MEDIPTESVQ…SDNQLGNDLE (71 aa). Low complexity predominate over residues 126–136; that stretch reads SAASTSTSTQS. Disordered stretches follow at residues 126 to 172 and 186 to 210; these read SAAS…WEQK and TMWS…PPDY. Positions 137-146 are enriched in basic residues; that stretch reads RSKKPSKKPS. Composition is skewed to polar residues over residues 154 to 165 and 186 to 196; these read EANPAGSSSSLG and TMWSPNDNNDQ. Residues 237–372 form a mediates transcriptional repression region; it reads EFTKVKPKRS…LTHVKTKNNP (136 aa). 4 C2H2-type zinc fingers span residues 254 to 278, 283 to 305, 311 to 335, and 341 to 365; these read VPCS…LHIH, HVCA…QLVH, FQCT…LRIH, and FVCP…ILTH.

The protein belongs to the YY transcription factor family. Expressed in kidney, liver, spleen and testis but not in colon.

Its subcellular location is the nucleus. In terms of biological role, functions as a multifunctional transcription factor that may exhibit positive and negative control on a large number of genes. May antagonize YY1 and function in development and differentiation. This Homo sapiens (Human) protein is Transcription factor YY2 (YY2).